Here is a 407-residue protein sequence, read N- to C-terminus: MTPEKTKEVFQMFKGAPTRRKSENAHSHRVVLNQLQNHPPRNATQSPQRQPRTSESSMDFPRSALRRNSTDTHVFANRTHNHRDINVPACSSEEDRVSTARRNSLFVKRGSVTMEPIKKVDLEEVYTVNKQLGTGRFGFIKLAEHKQSKQRIAIKFFPRPQTKQADFVREYNYSFFLSPHQNIIDTYEGMFQSSDDTAYFFVQEFCPRASLREAVEATNQAGIGEANTKKVFAAVLSAIEFMHDENLVHRNLKAENILIFDANDYSKVKVTDFGLTRKVDTTVKYLEYVNNYHAAELCDTVVNEKLVVNKSTDIWALGIIFFYCMKGKFPWQKASIMCKPYWEWEQWLKRKNPALPKKFNPFSEKALKLFKKSLTPRFKDRWTAKDMRKCLAKEKLLKSVKVAVPYY.

The segment covering 33–57 (NQLQNHPPRNATQSPQRQPRTSESS) has biased composition (polar residues). The tract at residues 33–68 (NQLQNHPPRNATQSPQRQPRTSESSMDFPRSALRRN) is disordered. Residues 126 to 397 (YTVNKQLGTG…RKCLAKEKLL (272 aa)) enclose the Protein kinase domain. Residues 132–140 (LGTGRFGFI) and K155 contribute to the ATP site. Catalysis depends on N251, which acts as the Proton acceptor.

Belongs to the protein kinase superfamily. Ser/Thr protein kinase family.

The enzyme catalyses L-seryl-[protein] + ATP = O-phospho-L-seryl-[protein] + ADP + H(+). It catalyses the reaction L-threonyl-[protein] + ATP = O-phospho-L-threonyl-[protein] + ADP + H(+). The chain is Putative serine/threonine-protein kinase C01C4.3 from Caenorhabditis elegans.